The primary structure comprises 224 residues: Ribonuclease 3 (224 aa).

The 124-residue stretch at 4-127 (IEKLEQSLTY…IIGAIHLEAG (124 aa)) folds into the RNase III domain. Residue glutamate 40 participates in Mg(2+) binding. Aspartate 44 is an active-site residue. Mg(2+) contacts are provided by aspartate 113 and glutamate 116. The active site involves glutamate 116. The DRBM domain maps to 154–223 (DYKTKLQEIT…AKIALEKLGA (70 aa)).

Belongs to the ribonuclease III family. Homodimer. Mg(2+) is required as a cofactor.

It is found in the cytoplasm. The enzyme catalyses Endonucleolytic cleavage to 5'-phosphomonoester.. Its function is as follows. Digests double-stranded RNA. Involved in the processing of primary rRNA transcript to yield the immediate precursors to the large and small rRNAs (23S and 16S). Processes some mRNAs, and tRNAs when they are encoded in the rRNA operon. Processes pre-crRNA and tracrRNA of type II CRISPR loci if present in the organism. The polypeptide is Ribonuclease 3 (Campylobacter jejuni subsp. jejuni serotype O:6 (strain 81116 / NCTC 11828)).